Here is a 762-residue protein sequence, read N- to C-terminus: Endonuclease MutS2 (762 aa).

Residue 333–340 (GVNAGGKT) participates in ATP binding. Residues 688 to 762 (LDLRGQRSEE…GGSGVKIVKL (75 aa)) form the Smr domain.

Belongs to the DNA mismatch repair MutS family. MutS2 subfamily. As to quaternary structure, homodimer. Binds to stalled ribosomes, contacting rRNA.

Its function is as follows. Endonuclease that is involved in the suppression of homologous recombination and thus may have a key role in the control of bacterial genetic diversity. Acts as a ribosome collision sensor, splitting the ribosome into its 2 subunits. Detects stalled/collided 70S ribosomes which it binds and splits by an ATP-hydrolysis driven conformational change. Acts upstream of the ribosome quality control system (RQC), a ribosome-associated complex that mediates the extraction of incompletely synthesized nascent chains from stalled ribosomes and their subsequent degradation. Probably generates substrates for RQC. The chain is Endonuclease MutS2 from Helicobacter pylori (strain J99 / ATCC 700824) (Campylobacter pylori J99).